Here is a 136-residue protein sequence, read N- to C-terminus: Histone H3, embryonic (136 aa).

The interval 1 to 43 (MARTKQTARKSTGGKAPRKQLATKAARKSAPATGGVKKPHRYR) is disordered. K5 is modified (N6-methylated lysine). K10 carries the N6-acetyllysine; alternate modification. K10 bears the N6-methylated lysine; alternate mark. Position 11 is a phosphoserine (S11). Residues K15 and K24 each carry the N6-acetyllysine modification. N6-methylated lysine is present on residues K28, K37, and K80.

This sequence belongs to the histone H3 family. In terms of assembly, the nucleosome is a histone octamer containing two molecules each of H2A, H2B, H3 and H4 assembled in one H3-H4 heterotetramer and two H2A-H2B heterodimers. The octamer wraps approximately 147 bp of DNA. Post-translationally, acetylation is generally linked to gene activation. Methylation at Lys-5 is linked to gene activation. Methylation at Lys-10 is linked to gene repression.

The protein localises to the nucleus. Its subcellular location is the chromosome. Functionally, core component of nucleosome. Nucleosomes wrap and compact DNA into chromatin, limiting DNA accessibility to the cellular machineries which require DNA as a template. Histones thereby play a central role in transcription regulation, DNA repair, DNA replication and chromosomal stability. DNA accessibility is regulated via a complex set of post-translational modifications of histones, also called histone code, and nucleosome remodeling. This is Histone H3, embryonic from Paracentrotus lividus (Common sea urchin).